Here is a 191-residue protein sequence, read N- to C-terminus: MQYDIAAIVEGYAQGYFLMADERDRLSWYGSRDRTFIPLDERFRYPKSLQRVLNQERFTVAINRDFQAVVAGCADRETTWISPELEKIYWLLYQSGYAFSFETWQGDELAGGILGIVIGGAFIGESMFYRIPEGSKVAMVKLVERLRQRKFVFFDAQMMNPHLERFGAYRVKDEGYQVLLEQALQRACNLV.

It belongs to the L/F-transferase family.

It localises to the cytoplasm. The catalysed reaction is N-terminal L-lysyl-[protein] + L-leucyl-tRNA(Leu) = N-terminal L-leucyl-L-lysyl-[protein] + tRNA(Leu) + H(+). It carries out the reaction N-terminal L-arginyl-[protein] + L-leucyl-tRNA(Leu) = N-terminal L-leucyl-L-arginyl-[protein] + tRNA(Leu) + H(+). The enzyme catalyses L-phenylalanyl-tRNA(Phe) + an N-terminal L-alpha-aminoacyl-[protein] = an N-terminal L-phenylalanyl-L-alpha-aminoacyl-[protein] + tRNA(Phe). Functions in the N-end rule pathway of protein degradation where it conjugates Leu, Phe and, less efficiently, Met from aminoacyl-tRNAs to the N-termini of proteins containing an N-terminal arginine or lysine. This Nostoc punctiforme (strain ATCC 29133 / PCC 73102) protein is Leucyl/phenylalanyl-tRNA--protein transferase.